Consider the following 428-residue polypeptide: 3-phosphoshikimate 1-carboxyvinyltransferase (428 aa).

Positions 21, 22, and 26 each coordinate 3-phosphoshikimate. K21 serves as a coordination point for phosphoenolpyruvate. G91 and R119 together coordinate phosphoenolpyruvate. The 3-phosphoshikimate site is built by S164, Q166, D313, and K340. Q166 contacts phosphoenolpyruvate. Residue D313 is the Proton acceptor of the active site. Phosphoenolpyruvate contacts are provided by R344 and R386.

Belongs to the EPSP synthase family. Monomer.

The protein resides in the cytoplasm. It catalyses the reaction 3-phosphoshikimate + phosphoenolpyruvate = 5-O-(1-carboxyvinyl)-3-phosphoshikimate + phosphate. It participates in metabolic intermediate biosynthesis; chorismate biosynthesis; chorismate from D-erythrose 4-phosphate and phosphoenolpyruvate: step 6/7. Functionally, catalyzes the transfer of the enolpyruvyl moiety of phosphoenolpyruvate (PEP) to the 5-hydroxyl of shikimate-3-phosphate (S3P) to produce enolpyruvyl shikimate-3-phosphate and inorganic phosphate. In Campylobacter jejuni subsp. doylei (strain ATCC BAA-1458 / RM4099 / 269.97), this protein is 3-phosphoshikimate 1-carboxyvinyltransferase.